Consider the following 908-residue polypeptide: Low affinity vacuolar monovalent cation/H(+) antiporter (908 aa).

Residues 1–15 (MAKNNHISASGNSTS) are compositionally biased toward polar residues. The interval 1–20 (MAKNNHISASGNSTSGDHRL) is disordered. Residues 1 to 244 (MAKNNHISAS…WEVTCSNVLW (244 aa)) lie on the Cytoplasmic side of the membrane. Position 26 is a phosphothreonine (Thr-26). Phosphoserine is present on Ser-32. Thr-33 is modified (phosphothreonine). A disordered region spans residues 68-147 (NKSKRSVSSQ…DDEDANDDSR (80 aa)). The span at 73–87 (SVSSQSPIVHSSNNT) shows a compositional bias: low complexity. The span at 102 to 121 (ESLSSKSHSVPDLNTATPSS) shows a compositional bias: polar residues. Position 110 is a phosphoserine (Ser-110). Thr-118 carries the post-translational modification Phosphothreonine. Phosphoserine is present on Ser-121. A helical membrane pass occupies residues 245–265 (FILFGFPIAILFYSAAIVVFL). The Vacuolar portion of the chain corresponds to 266 to 408 (LGGGGLVTNS…GRVLFYTIFH (143 aa)). Asn-361 is a glycosylation site (N-linked (GlcNAc...) asparagine). Residues 409 to 429 (LVLQPILAVLSLCLWLLVFTI) traverse the membrane as a helical segment. At 430 to 494 (PMSNVLWQIM…HYYKYTVDGT (65 aa)) the chain is on the cytoplasmic side. The chain crosses the membrane as a helical span at residues 495-515 (NVIVVNLISIVFFTIFDFYVL). The Vacuolar portion of the chain corresponds to 516-530 (KNFLHWKTWFTYESS). Residues 531–551 (IFILCLTSTIPLAFYIGQAVA) traverse the membrane as a helical segment. Over 552–560 (SISAQTSMG) the chain is Cytoplasmic. The helical transmembrane segment at 561-581 (VGAVINAFFSTIVEIFLYCVA) threads the bilayer. The Vacuolar segment spans residues 582-587 (LQQKKG). Residues 588 to 608 (LLVEGSMIGSILGAVLLLPGL) form a helical membrane-spanning segment. The Cytoplasmic portion of the chain corresponds to 609-626 (SMCGGALNRKTQRYNPAS). Residues 627-647 (AGVSSALLIFSMIVMFVPTVL) traverse the membrane as a helical segment. Residues 648 to 686 (YEIYGGYSVNCADGANDRDCTFSHPPLKFNRLFTHVIQP) are Vacuolar-facing. A helical transmembrane segment spans residues 687 to 707 (MSISCAIVLFCAYIIGLWFTL). Topologically, residues 708-746 (RTHAKMIWQLPIADPTSTAPEQQEQNSHDAPNWSRSKST) are cytoplasmic. Residues 747 to 767 (CILLMSTLLYAIIAEILVSCV) form a helical membrane-spanning segment. Residues 768–783 (DAVLEDIPSLNPKFLG) lie on the Vacuolar side of the membrane. The chain crosses the membrane as a helical span at residues 784–804 (LTIFALIPNTTEFLNAISFAI). Topologically, residues 805 to 816 (HGNVALSMEIGS) are cytoplasmic. A helical transmembrane segment spans residues 817 to 837 (AYALQVCLLQIPSLVIYSIFY). Topologically, residues 838-851 (TWNVKKSMINIRTQ) are vacuolar. The helical transmembrane segment at 852–872 (MFPLVFPRWDIFGAMTSVFMF) threads the bilayer. Topologically, residues 873–885 (TYLYAEGKSNYFK) are cytoplasmic. A helical membrane pass occupies residues 886–906 (GSMLILLYIIIVVGFYFQGAL). The Vacuolar portion of the chain corresponds to 907 to 908 (SE).

Belongs to the Ca(2+):cation antiporter (CaCA) (TC 2.A.19) family.

The protein resides in the vacuole membrane. Functionally, has a role in promoting intracellular monovalent cation sequestration via the exchange of monovalent cations and especially Na(+) for hydrogen ions across the vacuolar membrane. In Saccharomyces cerevisiae (strain ATCC 204508 / S288c) (Baker's yeast), this protein is Low affinity vacuolar monovalent cation/H(+) antiporter (VNX1).